The following is a 321-amino-acid chain: Aspartate carbamoyltransferase catalytic subunit (321 aa).

Arg-65 and Thr-66 together coordinate carbamoyl phosphate. Position 93 (Lys-93) interacts with L-aspartate. 3 residues coordinate carbamoyl phosphate: Arg-115, His-143, and Gln-146. Positions 176 and 230 each coordinate L-aspartate. Carbamoyl phosphate is bound by residues Gly-271 and Pro-272.

Belongs to the aspartate/ornithine carbamoyltransferase superfamily. ATCase family. As to quaternary structure, heterododecamer (2C3:3R2) of six catalytic PyrB chains organized as two trimers (C3), and six regulatory PyrI chains organized as three dimers (R2).

It carries out the reaction carbamoyl phosphate + L-aspartate = N-carbamoyl-L-aspartate + phosphate + H(+). The protein operates within pyrimidine metabolism; UMP biosynthesis via de novo pathway; (S)-dihydroorotate from bicarbonate: step 2/3. Functionally, catalyzes the condensation of carbamoyl phosphate and aspartate to form carbamoyl aspartate and inorganic phosphate, the committed step in the de novo pyrimidine nucleotide biosynthesis pathway. The chain is Aspartate carbamoyltransferase catalytic subunit from Bartonella bacilliformis (strain ATCC 35685 / KC583 / Herrer 020/F12,63).